Reading from the N-terminus, the 121-residue chain is MTIEMLYSKIHRATVTDANLNYVGSITVDEELLEASMLRVGQKVEILNINNGERFSTYIILGERGKRDICLNGAAARKVHKGDKIIIVAYATYDEKELQNYKPRVVLVNDNNDIEEILESI.

Ser-25 (schiff-base intermediate with substrate; via pyruvic acid) is an active-site residue. Ser-25 carries the pyruvic acid (Ser) modification. A substrate-binding site is contributed by Thr-57. Tyr-58 serves as the catalytic Proton donor. Substrate is bound at residue 73 to 75; it reads GAA.

It belongs to the PanD family. In terms of assembly, heterooctamer of four alpha and four beta subunits. Pyruvate is required as a cofactor. Post-translationally, is synthesized initially as an inactive proenzyme, which is activated by self-cleavage at a specific serine bond to produce a beta-subunit with a hydroxyl group at its C-terminus and an alpha-subunit with a pyruvoyl group at its N-terminus.

The protein localises to the cytoplasm. It catalyses the reaction L-aspartate + H(+) = beta-alanine + CO2. The protein operates within cofactor biosynthesis; (R)-pantothenate biosynthesis; beta-alanine from L-aspartate: step 1/1. In terms of biological role, catalyzes the pyruvoyl-dependent decarboxylation of aspartate to produce beta-alanine. This Sulfurimonas denitrificans (strain ATCC 33889 / DSM 1251) (Thiomicrospira denitrificans (strain ATCC 33889 / DSM 1251)) protein is Aspartate 1-decarboxylase.